Consider the following 302-residue polypeptide: Pathogenicity locus probable regulatory protein HrpS (302 aa).

The Sigma-54 factor interaction domain occupies 9–237 (DDLDEERVPN…LKAAAKRHVL (229 aa)). ATP contacts are provided by residues 37–44 (GETGTGKD) and 99–108 (AQGGTLYLDE). Positions 279 to 298 (IDAASLELDMPRRTLYRRIK) form a DNA-binding region, H-T-H motif.

Member of the two-component regulatory system HrpR/HrpS that regulates the activation of the sigma factor hrpL which itself induces the expression of hprD as well as other hrp loci which are involved in plant pathogenicity, hrmA and avr genes. Probably interacts with sigma-54. The sequence is that of Pathogenicity locus probable regulatory protein HrpS (hrpS) from Pseudomonas savastanoi pv. phaseolicola (Pseudomonas syringae pv. phaseolicola).